The primary structure comprises 70 residues: Small ribosomal subunit protein bS21 (70 aa).

Belongs to the bacterial ribosomal protein bS21 family.

This is Small ribosomal subunit protein bS21 from Nitrosomonas eutropha (strain DSM 101675 / C91 / Nm57).